Here is a 302-residue protein sequence, read N- to C-terminus: Acidic endochitinase (302 aa).

The first 30 residues, 1–30, serve as a signal peptide directing secretion; sequence MTNMTLRKHVIYFLFFISCSLSKPSDASRG. The 272-residue stretch at 31–302 folds into the GH18 domain; it reads GIAIYWGQNG…GYSSSILASV (272 aa). Intrachain disulfides connect Cys-49-Cys-96 and Cys-79-Cys-86. The Proton donor role is filled by Glu-156. Residues Cys-188 and Cys-217 are joined by a disulfide bond.

It belongs to the glycosyl hydrolase 18 family. Chitinase class III subfamily.

The protein resides in the secreted. It localises to the extracellular space. It carries out the reaction Random endo-hydrolysis of N-acetyl-beta-D-glucosaminide (1-&gt;4)-beta-linkages in chitin and chitodextrins.. Functionally, this protein functions as a defense against chitin containing fungal pathogens. This chain is Acidic endochitinase (CHIB1), found in Arabidopsis thaliana (Mouse-ear cress).